The primary structure comprises 296 residues: Bifunctional protein FolD 1 (296 aa).

Residues 167-169 and Ile-235 each bind NADP(+); that span reads GCG.

Belongs to the tetrahydrofolate dehydrogenase/cyclohydrolase family. Homodimer.

It carries out the reaction (6R)-5,10-methylene-5,6,7,8-tetrahydrofolate + NADP(+) = (6R)-5,10-methenyltetrahydrofolate + NADPH. The catalysed reaction is (6R)-5,10-methenyltetrahydrofolate + H2O = (6R)-10-formyltetrahydrofolate + H(+). The protein operates within one-carbon metabolism; tetrahydrofolate interconversion. Functionally, catalyzes the oxidation of 5,10-methylenetetrahydrofolate to 5,10-methenyltetrahydrofolate and then the hydrolysis of 5,10-methenyltetrahydrofolate to 10-formyltetrahydrofolate. The polypeptide is Bifunctional protein FolD 1 (Nocardioides sp. (strain ATCC BAA-499 / JS614)).